The chain runs to 271 residues: NADPH-dependent 7-cyano-7-deazaguanine reductase (271 aa).

Position 79 to 81 (79 to 81 (IES)) interacts with substrate. 81 to 82 (SK) is a binding site for NADPH. The Thioimide intermediate role is filled by C178. D185 (proton donor) is an active-site residue. 217–218 (HE) lines the substrate pocket. Residue 246 to 247 (RG) participates in NADPH binding.

It belongs to the GTP cyclohydrolase I family. QueF type 2 subfamily. As to quaternary structure, homodimer.

The protein localises to the cytoplasm. It catalyses the reaction 7-aminomethyl-7-carbaguanine + 2 NADP(+) = 7-cyano-7-deazaguanine + 2 NADPH + 3 H(+). The protein operates within tRNA modification; tRNA-queuosine biosynthesis. Catalyzes the NADPH-dependent reduction of 7-cyano-7-deazaguanine (preQ0) to 7-aminomethyl-7-deazaguanine (preQ1). This Acinetobacter baylyi (strain ATCC 33305 / BD413 / ADP1) protein is NADPH-dependent 7-cyano-7-deazaguanine reductase.